A 349-amino-acid polypeptide reads, in one-letter code: Isopentenyl-diphosphate delta-isomerase (349 aa).

9-10 (RK) is a binding site for substrate. FMN-binding positions include 65–67 (AMT), serine 95, and asparagine 124. 95–97 (STH) provides a ligand contact to substrate. Residue glutamine 154 participates in substrate binding. Glutamate 155 provides a ligand contact to Mg(2+). FMN-binding positions include lysine 186, serine 211, threonine 216, 262–264 (GLR), and 283–284 (SR).

Belongs to the IPP isomerase type 2 family. In terms of assembly, homooctamer. Dimer of tetramers. FMN serves as cofactor. Requires NADPH as cofactor. The cofactor is Mg(2+).

The protein resides in the cytoplasm. It catalyses the reaction isopentenyl diphosphate = dimethylallyl diphosphate. In terms of biological role, involved in the biosynthesis of isoprenoids. Catalyzes the 1,3-allylic rearrangement of the homoallylic substrate isopentenyl (IPP) to its allylic isomer, dimethylallyl diphosphate (DMAPP). This is Isopentenyl-diphosphate delta-isomerase from Staphylococcus aureus (strain MSSA476).